The sequence spans 424 residues: Putative chloroquine resistance transporter (424 aa).

The Cytoplasmic portion of the chain corresponds to 1–57 (MKILKKKKKGNQQIVPDERYRELDSHAPNENEIADEAPMSRKILYYLKLVYHEIREN). A helical transmembrane segment spans residues 58 to 78 (ITIYLLIILYLCVCVMNKIMA). The Vacuolar portion of the chain corresponds to 79 to 89 (KRTLKKIGNYS). Asparagine 87 carries an N-linked (GlcNAc...) asparagine glycan. Residues 90–110 (FVTSETHNTICMVVFFSLYFI) traverse the membrane as a helical segment. Residues 111–124 (FGRRVTSAKERHQN) lie on the Cytoplasmic side of the membrane. Residues 125-145 (FGLQFLLISLLDACSVIIAFI) traverse the membrane as a helical segment. Over 146-153 (GLTRTTGN) the chain is Vacuolar. A helical transmembrane segment spans residues 154–174 (IQSFVMQLSIPINMFFCFLIL). Topologically, residues 175 to 179 (RYRYH) are cytoplasmic. A helical transmembrane segment spans residues 180–200 (LFNYVGASIIVLTIAIVEFIL). Residues 201-208 (SFETQEEN) are Vacuolar-facing. Residues 209–229 (SIVFNLVLIASLIPMSFSNMT) form a helical membrane-spanning segment. Residues 230–246 (REIVFKKYKINILRLNA) lie on the Cytoplasmic side of the membrane. A helical membrane pass occupies residues 247 to 267 (VVSFFQIFTSCLMLPMYTLPF). Topologically, residues 268–316 (LKQINLPFSEIGTNIKNGFRCLILGQNTIVENCGLGMAKMCDDCEGAWK) are vacuolar. Cystine bridges form between cysteine 288/cysteine 311 and cysteine 300/cysteine 308. Residues 317-337 (TFLAYSFFNICDNLITSFIID) traverse the membrane as a helical segment. The Cytoplasmic portion of the chain corresponds to 338–345 (KFSTMTYT). The chain crosses the membrane as a helical span at residues 346 to 366 (IVSCIQGPAIAIAYYFKFLAG). Topologically, residues 367–376 (DAVMKPRVLD) are vacuolar. The helical transmembrane segment at 377-397 (FVTLFGYLFGSIIYRVGNIIL) threads the bilayer. Residues 398–424 (EKKKMMEAGNDDDSEGELTNAESIITQ) lie on the Cytoplasmic side of the membrane.

Belongs to the CRT-like transporter family.

Its subcellular location is the vacuole membrane. Functionally, nutrient transporter. Involved in maintaining the osmotic homeostasis of the digestive vacuole. In Plasmodium knowlesi, this protein is Putative chloroquine resistance transporter.